The sequence spans 166 residues: Cofilin-1 (166 aa).

A2 is modified (N-acetylalanine). S3 and S8 each carry phosphoserine. One can recognise an ADF-H domain in the interval 4-153; sequence GVAVSDGVIK…KDRCTLAEKL (150 aa). N6-acetyllysine is present on K13. T25 carries the phosphothreonine modification. The Nuclear localization signal signature appears at 30-34; the sequence is KKRKK. Phosphoserine is present on S41. A Phosphothreonine modification is found at T63. The residue at position 68 (Y68) is a Phosphotyrosine. Position 73 is an N6-acetyllysine (K73). The residue at position 82 (Y82) is a Phosphotyrosine. Residue K132 forms a Glycyl lysine isopeptide (Lys-Gly) (interchain with G-Cter in SUMO2) linkage. At Y140 the chain carries Phosphotyrosine. K144 is subject to N6-acetyllysine. The residue at position 156 (S156) is a Phosphoserine.

The protein belongs to the actin-binding proteins ADF family. As to quaternary structure, can bind G- and F-actin in a 1:1 ratio of cofilin to actin. It is a major component of intranuclear and cytoplasmic actin rods. Interacts with the subcortical maternal complex (SCMC) via interaction with TLE6 and NLRP5. Interacts with C9orf72. Inactivated by phosphorylation on Ser-3. Phosphorylated on Ser-3 in resting cells. Dephosphorylated by PDXP/chronophin; this restores its activity in promoting actin filament depolymerization. The phosphorylation of Ser-24 may prevent recognition of the nuclear localization signal. Phosphorylated via a ARRB1-RAC1-LIMK1-PAK1 cascade upon active ligand stimulation of atypical chemokine receptor ACKR2. Widely distributed in various tissues. Not found in skeletal muscle.

It is found in the nucleus matrix. The protein resides in the cytoplasm. Its subcellular location is the cytoskeleton. It localises to the cell projection. The protein localises to the ruffle membrane. It is found in the lamellipodium membrane. The protein resides in the lamellipodium. Its subcellular location is the growth cone. It localises to the axon. In terms of biological role, binds to F-actin and exhibits pH-sensitive F-actin depolymerizing activity. In conjunction with the subcortical maternal complex (SCMC), plays an essential role for zygotes to progress beyond the first embryonic cell divisions via regulation of actin dynamics. Required for the centralization of the mitotic spindle and symmetric division of zygotes. Plays a role in the regulation of cell morphology and cytoskeletal organization in epithelial cells. Required for the up-regulation of atypical chemokine receptor ACKR2 from endosomal compartment to cell membrane, increasing its efficiency in chemokine uptake and degradation. Required for neural tube morphogenesis and neural crest cell migration. This is Cofilin-1 (Cfl1) from Mus musculus (Mouse).